Consider the following 254-residue polypeptide: 3-deoxy-manno-octulosonate cytidylyltransferase (254 aa).

It belongs to the KdsB family.

It is found in the cytoplasm. The enzyme catalyses 3-deoxy-alpha-D-manno-oct-2-ulosonate + CTP = CMP-3-deoxy-beta-D-manno-octulosonate + diphosphate. Its pathway is nucleotide-sugar biosynthesis; CMP-3-deoxy-D-manno-octulosonate biosynthesis; CMP-3-deoxy-D-manno-octulosonate from 3-deoxy-D-manno-octulosonate and CTP: step 1/1. It participates in bacterial outer membrane biogenesis; lipopolysaccharide biosynthesis. Functionally, activates KDO (a required 8-carbon sugar) for incorporation into bacterial lipopolysaccharide in Gram-negative bacteria. The protein is 3-deoxy-manno-octulosonate cytidylyltransferase of Pseudoalteromonas atlantica (strain T6c / ATCC BAA-1087).